The primary structure comprises 1497 residues: ABC multidrug transporter C (1497 aa).

Over residues Met-1–Pro-13 the composition is skewed to polar residues. Residues Met-1 to Gly-21 are disordered. 2 N-linked (GlcNAc...) asparagine glycosylation sites follow: Asn-137 and Asn-336. In terms of domain architecture, ABC transporter 1 spans Leu-158–Glu-412. 5 consecutive transmembrane segments (helical) span residues Leu-523 to Tyr-543, Ala-557 to Leu-577, Ala-599 to Leu-621, Gly-632 to Phe-652, and Ala-665 to Pro-685. Asn-762 carries an N-linked (GlcNAc...) asparagine glycan. A helical membrane pass occupies residues Gly-777 to Ile-797. The interval Gln-815–Thr-843 is disordered. In terms of domain architecture, ABC transporter 2 spans Phe-853 to Ala-1096. Gly-889 to Thr-896 contacts ATP. 5 consecutive transmembrane segments (helical) span residues Tyr-1192–Phe-1212, Phe-1226–Phe-1246, Ile-1273–Tyr-1293, Leu-1313–Ile-1333, and Leu-1352–Phe-1372. N-linked (GlcNAc...) asparagine glycosylation occurs at Asn-1411. The helical transmembrane segment at Phe-1464–Leu-1484 threads the bilayer.

This sequence belongs to the ABC transporter superfamily. ABCG family. PDR (TC 3.A.1.205) subfamily.

Its subcellular location is the cell membrane. The enzyme catalyses fluconazole(in) + ATP + H2O = fluconazole(out) + ADP + phosphate + H(+). It catalyses the reaction itraconazole(in) + ATP + H2O = itraconazole(out) + ADP + phosphate + H(+). The catalysed reaction is voriconazole(in) + ATP + H2O = voriconazole(out) + ADP + phosphate + H(+). The efflux inhibitor FK506 impairs the transport activity. Its function is as follows. Pleiotropic ABC efflux transporter that shows a strong substrate specificity for the azole class of drugs such as lotrimazole (CLT), fluconazole (FLC), itraconazole (ITC), ketoconazole (KTC), posaconazole (POS), tebuconazole (TEBZ), and voriconazole (VRC). Is also able to transport rhodamine 6G (R-6G), a known substrate for many ABC transporters. Required for normal pathogenesis in a Galleria mellonella (greater wax moth) infection model. The polypeptide is ABC multidrug transporter C (Aspergillus fumigatus (strain ATCC MYA-4609 / CBS 101355 / FGSC A1100 / Af293) (Neosartorya fumigata)).